A 438-amino-acid chain; its full sequence is Battenin (438 aa).

Residues 1-25 form a disordered region; it reads MGGCAGSRRRLSDSEGEETVPEPRL. Topologically, residues 1–37 are cytoplasmic; that stretch reads MGGCAGSRRRLSDSEGEETVPEPRLPLLDHQGAHWKN. Ser12 and Ser14 each carry phosphoserine. Residues 38 to 58 traverse the membrane as a helical segment; the sequence is AVGFWLLGLCNNFSYVVMLSA. At 59–127 the chain is on the lumenal side; the sequence is AHDILSHERT…GLHLLPYSPR (69 aa). Residues Asn71 and Asn85 are each glycosylated (N-linked (GlcNAc...) asparagine). A helical transmembrane segment spans residues 128 to 148; the sequence is VLVSGICAAGSFVLVAFSHSV. The Cytoplasmic segment spans residues 149 to 151; sequence GTS. The chain crosses the membrane as a helical span at residues 152 to 172; it reads LCGVVLASISSGLGEVTFLSL. The Lumenal segment spans residues 173–182; that stretch reads TAFYPRAVIS. A helical membrane pass occupies residues 183 to 203; that stretch reads WWSSGTGGAGLLGALSYLGLT. Topologically, residues 204–277 are cytoplasmic; sequence QAGLSPQQTL…SLSLRERWTV (74 aa). The tract at residues 237–268 is disordered; sequence QDPGGEEEAESSARQPLIRTEAPESKPGSSSS. A Lysosomal targeting motif motif is present at residues 242–244; the sequence is EEE. A Lysosomal targeting motif. Required for AP1G1, AP2A2 and AP3D1 interaction motif is present at residues 253-254; it reads LI. Residues 278–298 form a helical membrane-spanning segment; sequence FKGLLWYIVPLVVVYFAEYFI. Over 299-346 the chain is Lumenal; sequence NQGLFELLFFRNTSLSHAQQYRWYQMLYQAGVFASRSSLRCCHIRFTW. N-linked (GlcNAc...) asparagine glycosylation occurs at Asn310. Residues 347–367 traverse the membrane as a helical segment; it reads ALALLQCLNLAFLLADVWFGF. Over 368–438 the chain is Cytoplasmic; that stretch reads LLSIYFVFLI…PLHDFLCQLS (71 aa). A Lysosomal targeting motif motif is present at residues 409-419; it reads MATTCISDTLG. Cys435 carries the post-translational modification Cysteine methyl ester. Residue Cys435 is the site of S-farnesyl cysteine attachment. Positions 436-438 are cleaved as a propeptide — removed in mature form; sequence QLS.

Belongs to the battenin family. Interacts with DCTN1, KIF3A, RAB7A and RILP. Interacts with CLN5. In terms of processing, highly glycosylated. Farnesylation is important for trafficking to lysosomes.

The protein resides in the lysosome membrane. Its subcellular location is the late endosome. It localises to the lysosome. In terms of biological role, mediates microtubule-dependent, anterograde transport connecting the Golgi network, endosomes, autophagosomes, lysosomes and plasma membrane, and participates in several cellular processes such as regulation of lysosomal pH, lysosome protein degradation, receptor-mediated endocytosis, autophagy, transport of proteins and lipids from the TGN, apoptosis and synaptic transmission. Facilitates the proteins transport from trans-Golgi network (TGN)-to other membrane compartments such as transport of microdomain-associated proteins to the plasma membrane, IGF2R transport to the lysosome where it regulates the CTSD release leading to regulation of CTSD maturation and thereby APP intracellular processing. Moreover regulates CTSD activity in response to osmotic stress. Also binds galactosylceramide and transports it from the trans Golgi to the rafts, which may have immediate and downstream effects on cell survival by modulating ceramide synthesis. At the plasma membrane, regulates actin-dependent events including filopodia formation, cell migration, and pinocytosis through ARF1-CDC42 pathway and also the cytoskeleton organization through interaction with MYH10 and fodrin leading to the regulation of the plasma membrane association of Na+, K+ ATPase complex. Regulates synaptic transmission in the amygdala, hippocampus, and cerebellum through regulation of synaptic vesicles density and their proximity to active zones leading to modulation of short-term plasticity and age-dependent anxious behavior, learning and memory. Regulates autophagic vacuoles (AVs) maturation by modulating the trafficking between endocytic and autophagolysosomal/lysosomal compartments, which involves vesicle fusion leading to regulation of degradation process. Also participates in cellular homeostasis of compounds such as, water, ions, amino acids, proteins and lipids in several tissue namely in brain and kidney through regulation of their transport and synthesis. This is Battenin from Macaca fascicularis (Crab-eating macaque).